The sequence spans 316 residues: Transaldolase (316 aa).

Lys-127 acts as the Schiff-base intermediate with substrate in catalysis.

This sequence belongs to the transaldolase family. Type 2 subfamily.

Its subcellular location is the cytoplasm. The catalysed reaction is D-sedoheptulose 7-phosphate + D-glyceraldehyde 3-phosphate = D-erythrose 4-phosphate + beta-D-fructose 6-phosphate. Its pathway is carbohydrate degradation; pentose phosphate pathway; D-glyceraldehyde 3-phosphate and beta-D-fructose 6-phosphate from D-ribose 5-phosphate and D-xylulose 5-phosphate (non-oxidative stage): step 2/3. Functionally, transaldolase is important for the balance of metabolites in the pentose-phosphate pathway. In Helicobacter pylori (strain ATCC 700392 / 26695) (Campylobacter pylori), this protein is Transaldolase (tal).